A 469-amino-acid polypeptide reads, in one-letter code: Putative dipeptidase SH1171 (469 aa).

His-84 provides a ligand contact to Zn(2+). Asp-86 is an active-site residue. Asp-115 contributes to the Zn(2+) binding site. Residue Glu-149 is the Proton acceptor of the active site. Glu-150, Asp-173, and His-440 together coordinate Zn(2+).

The protein belongs to the peptidase M20A family. The cofactor is Zn(2+).

This Staphylococcus haemolyticus (strain JCSC1435) protein is Putative dipeptidase SH1171.